The sequence spans 225 residues: DNA-binding response regulator MtrA (225 aa).

One can recognise a Response regulatory domain in the interval 4–117; the sequence is RILVVDDDAS…ELVARVRARL (114 aa). Asp53 is subject to 4-aspartylphosphate. The segment at residues 125-224 is a DNA-binding region (ompR/PhoB-type); the sequence is AEMLSIADVE…VRGVGYKAGP (100 aa).

Post-translationally, phosphorylated by MtrB.

Its function is as follows. Member of the two-component regulatory system MtrA/MtrB. This Mycolicibacterium paratuberculosis (strain ATCC BAA-968 / K-10) (Mycobacterium paratuberculosis) protein is DNA-binding response regulator MtrA (mtrA).